The chain runs to 337 residues: Major envelope glycoprotein (337 aa).

Residues N76, N114, N271, and N301 are each glycosylated (N-linked (GlcNAc...) asparagine; by host).

The protein belongs to the baculoviridae gp64 family. Post-translationally, palmitoylated.

Its subcellular location is the virion membrane. It localises to the host cell membrane. Envelope phosphoglycoprotein which mediates the fusion of viral and host endosomal membranes leading to virus entry into the host cell. The chain is Major envelope glycoprotein (GP67) from Lepidoptera (butterflies and moths).